The chain runs to 276 residues: 2,3,4,5-tetrahydropyridine-2,6-dicarboxylate N-succinyltransferase (276 aa).

Residues arginine 100 and aspartate 137 each contribute to the substrate site.

This sequence belongs to the transferase hexapeptide repeat family. In terms of assembly, homotrimer.

It localises to the cytoplasm. The catalysed reaction is (S)-2,3,4,5-tetrahydrodipicolinate + succinyl-CoA + H2O = (S)-2-succinylamino-6-oxoheptanedioate + CoA. It participates in amino-acid biosynthesis; L-lysine biosynthesis via DAP pathway; LL-2,6-diaminopimelate from (S)-tetrahydrodipicolinate (succinylase route): step 1/3. This is 2,3,4,5-tetrahydropyridine-2,6-dicarboxylate N-succinyltransferase from Zymomonas mobilis subsp. mobilis (strain ATCC 31821 / ZM4 / CP4).